The chain runs to 539 residues: Tetracenomycin B2 monooxygenase-dioxygenase (539 aa).

FAD contacts are provided by L15, E35, Q128, and L152. The Proton acceptor role is filled by Y231. Position 313 (D313) interacts with FAD.

Belongs to the PheA/TfdB FAD monooxygenase family. It depends on FAD as a cofactor.

It carries out the reaction tetracenomycin B2 + 2 NADPH + 2 O2 + 2 H(+) = 8-demethyltetracenomycin C + 2 NADP(+) + H2O. It catalyses the reaction tetracenomycin A2 + 2 NADPH + 2 O2 + 2 H(+) = tetracenomycin C + 2 NADP(+) + H2O. The protein operates within antibiotic biosynthesis. In terms of biological role, involved in the biosynthesis of elloramycin, an antitumor polyketide. In vivo, probably catalyzes the triple hydroxylation of 8-demethyltetracenomycin A2 (tetracenomycin B2) at positions C-4, C-4a and C-12a to give 8-demethyltetracenomycin C (8-DMTC). In vitro, catalyzes the triple hydroxylation of tetracenomycin A2 (TCM A2) to give tetracenomycin C (TCM C). Uses NADPH as an electron donor and requires molecular O(2). The polypeptide is Tetracenomycin B2 monooxygenase-dioxygenase (Streptomyces olivaceus).